Consider the following 253-residue polypeptide: Ubiquinone biosynthesis O-methyltransferase (253 aa).

S-adenosyl-L-methionine-binding residues include R47, G78, D99, and M141.

This sequence belongs to the methyltransferase superfamily. UbiG/COQ3 family.

The catalysed reaction is a 3-demethylubiquinol + S-adenosyl-L-methionine = a ubiquinol + S-adenosyl-L-homocysteine + H(+). It catalyses the reaction a 3-(all-trans-polyprenyl)benzene-1,2-diol + S-adenosyl-L-methionine = a 2-methoxy-6-(all-trans-polyprenyl)phenol + S-adenosyl-L-homocysteine + H(+). It functions in the pathway cofactor biosynthesis; ubiquinone biosynthesis. O-methyltransferase that catalyzes the 2 O-methylation steps in the ubiquinone biosynthetic pathway. The sequence is that of Ubiquinone biosynthesis O-methyltransferase from Rhodopseudomonas palustris (strain BisA53).